Consider the following 771-residue polypeptide: Polyribonucleotide nucleotidyltransferase (771 aa).

Positions 487 and 493 each coordinate Mg(2+). In terms of domain architecture, KH spans 554–613; sequence PRIETMQIDKAKIRDVIGTGGKVIREIVATTGAKVDIDDEGLIKISSSDLDQIEAARKWI. An S1 motif domain is found at 623–691; that stretch reads GKIYDGKVVN…PRGKVRLSMR (69 aa). The tract at residues 696–771 is disordered; it reads ETGAELEDTR…QGHVPDFLKD (76 aa). The segment covering 702–771 has biased composition (basic and acidic residues); sequence EDTRPAREPR…QGHVPDFLKD (70 aa).

It belongs to the polyribonucleotide nucleotidyltransferase family. It depends on Mg(2+) as a cofactor.

The protein localises to the cytoplasm. The enzyme catalyses RNA(n+1) + phosphate = RNA(n) + a ribonucleoside 5'-diphosphate. Functionally, involved in mRNA degradation. Catalyzes the phosphorolysis of single-stranded polyribonucleotides processively in the 3'- to 5'-direction. In Sphingopyxis alaskensis (strain DSM 13593 / LMG 18877 / RB2256) (Sphingomonas alaskensis), this protein is Polyribonucleotide nucleotidyltransferase.